Here is a 171-residue protein sequence, read N- to C-terminus: Shikimate kinase (171 aa).

Residue Gly14–Thr19 participates in ATP binding. Residue Ser18 participates in Mg(2+) binding. The substrate site is built by Asp36, Arg60, and Gly82. Residue Arg120 coordinates ATP. Residue Arg139 coordinates substrate. Gln156 is a binding site for ATP.

The protein belongs to the shikimate kinase family. Monomer. Mg(2+) serves as cofactor.

It is found in the cytoplasm. It catalyses the reaction shikimate + ATP = 3-phosphoshikimate + ADP + H(+). Its pathway is metabolic intermediate biosynthesis; chorismate biosynthesis; chorismate from D-erythrose 4-phosphate and phosphoenolpyruvate: step 5/7. In terms of biological role, catalyzes the specific phosphorylation of the 3-hydroxyl group of shikimic acid using ATP as a cosubstrate. In Shewanella baltica (strain OS195), this protein is Shikimate kinase.